The primary structure comprises 309 residues: NAD kinase (309 aa).

The active-site Proton acceptor is the Asp-89. Residues 89–90 (DG), 163–164 (NE), His-174, Arg-191, Asp-193, and 204–209 (TAYALS) contribute to the NAD(+) site.

The protein belongs to the NAD kinase family. The cofactor is a divalent metal cation.

It is found in the cytoplasm. The catalysed reaction is NAD(+) + ATP = ADP + NADP(+) + H(+). In terms of biological role, involved in the regulation of the intracellular balance of NAD and NADP, and is a key enzyme in the biosynthesis of NADP. Catalyzes specifically the phosphorylation on 2'-hydroxyl of the adenosine moiety of NAD to yield NADP. This chain is NAD kinase, found in Shewanella sp. (strain MR-4).